The following is a 298-amino-acid chain: Specificity protein transcription factor 1 (298 aa).

Residues 206–218 (VSSGSESVSARGT) are compositionally biased toward low complexity. Residues 206 to 233 (VSSGSESVSARGTSGSGGTGKYPSSRTA) form a disordered region. The C2H2-type zinc-finger motif lies at 260–284 (HNCHIAGCGKVYNKSSHLKAHLRWH).

It belongs to the Sp1 C2H2-type zinc-finger protein family. As to expression, expressed in ASJ sensory neurons, pharyngeal cells, rectal cells, intestine, seam cells, and vulval cells.

Probable transcription factor which modulates gene expression, thereby acting as an ASJ sensory neuron terminal selector gene. This is Specificity protein transcription factor 1 from Caenorhabditis elegans.